Consider the following 274-residue polypeptide: 3-methyl-2-oxobutanoate hydroxymethyltransferase (274 aa).

Residues D44 and D83 each contribute to the Mg(2+) site. Residues 44–45, D83, and K113 contribute to the 3-methyl-2-oxobutanoate site; that span reads DS. E115 serves as a coordination point for Mg(2+). Catalysis depends on E182, which acts as the Proton acceptor.

The protein belongs to the PanB family. In terms of assembly, homodecamer; pentamer of dimers. Mg(2+) serves as cofactor.

Its subcellular location is the cytoplasm. The catalysed reaction is 3-methyl-2-oxobutanoate + (6R)-5,10-methylene-5,6,7,8-tetrahydrofolate + H2O = 2-dehydropantoate + (6S)-5,6,7,8-tetrahydrofolate. It functions in the pathway cofactor biosynthesis; (R)-pantothenate biosynthesis; (R)-pantoate from 3-methyl-2-oxobutanoate: step 1/2. In terms of biological role, catalyzes the reversible reaction in which hydroxymethyl group from 5,10-methylenetetrahydrofolate is transferred onto alpha-ketoisovalerate to form ketopantoate. This is 3-methyl-2-oxobutanoate hydroxymethyltransferase from Campylobacter jejuni subsp. jejuni serotype O:23/36 (strain 81-176).